The following is a 245-amino-acid chain: tRNA (guanine-N(7)-)-methyltransferase (245 aa).

S-adenosyl-L-methionine contacts are provided by Glu75, Glu100, Asp127, and Asp149. Residue Asp149 is part of the active site. Substrate-binding positions include Lys153, Asp185, and 222-225; that span reads TKFE.

The protein belongs to the class I-like SAM-binding methyltransferase superfamily. TrmB family.

It carries out the reaction guanosine(46) in tRNA + S-adenosyl-L-methionine = N(7)-methylguanosine(46) in tRNA + S-adenosyl-L-homocysteine. It participates in tRNA modification; N(7)-methylguanine-tRNA biosynthesis. Its function is as follows. Catalyzes the formation of N(7)-methylguanine at position 46 (m7G46) in tRNA. This Acinetobacter baylyi (strain ATCC 33305 / BD413 / ADP1) protein is tRNA (guanine-N(7)-)-methyltransferase.